The chain runs to 381 residues: MEPPGPSTPTASAAARADHYTPGLRPLPKRRLLYSFALLLAVLQAVFVPVTANPAHNRPAGLQRPEESPSRGPCLAGQYLSEGNCKPCREGIDYTSHSNHSLDSCILCTVCKEDKVVETRCNITTNTVCRCKPGTFEDKDSPEICQSCSNCTDGEEELTSCTPRENRKCVSKTAWASWHKLGLWIGLLVPVVLLIGALLVWKTGAWRQWLLCIKRGCERDPESANSVHSSLLDRQTSSTTNDSNHNTEPGKTQKTGKKLLVPVNGNDSADDLKFIFEYCSDIVPFDSWNRLMRQLGLTDNQIQMVKAETLVTREALYQMLLKWRHQTGRSASINHLLDALEAVEERDAMEKIEDYAVKSGRFTYQNAAAQPETGPGGSQCV.

The first 52 residues, 1–52, serve as a signal peptide directing secretion; that stretch reads MEPPGPSTPTASAAARADHYTPGLRPLPKRRLLYSFALLLAVLQAVFVPVTA. TNFR-Cys repeat units lie at residues 26–86, 87–129, and 130–169; these read PLPK…GNCK, PCRE…NTVC, and RCKPGTFEDKDSPEICQSCSNCTDGEEELTSCTPRENRKC. The Extracellular segment spans residues 53-180; it reads NPAHNRPAGL…SKTAWASWHK (128 aa). 7 disulfides stabilise this stretch: Cys74–Cys85, Cys88–Cys105, Cys108–Cys121, Cys111–Cys129, Cys131–Cys145, Cys148–Cys161, and Cys151–Cys169. Residues 181-201 traverse the membrane as a helical segment; it reads LGLWIGLLVPVVLLIGALLVW. Topologically, residues 202–381 are cytoplasmic; that stretch reads KTGAWRQWLL…ETGPGGSQCV (180 aa). The disordered stretch occupies residues 228 to 260; that stretch reads HSSLLDRQTSSTTNDSNHNTEPGKTQKTGKKLL. The segment covering 236-247 has biased composition (low complexity); it reads TSSTTNDSNHNT. Positions 273-356 constitute a Death domain; the sequence is KFIFEYCSDI…DAMEKIEDYA (84 aa). (Microbial infection) N-beta-linked (GlcNAc) arginine glycosylation is present at Arg293.

As to quaternary structure, monomer. Can interact with TRADD and RIPK1. Three TNFRSF10B molecules interact with the TNFSF10 homotrimer. In the absence of stimulation, interacts with BIRC2, DDX3X and GSK3B. The interaction with BIRC2 and DDX3X is further enhanced upon receptor stimulation and accompanied by DDX3X and BIRC2 cleavage. In terms of processing, (Microbial infection) Glycosylated at Arg-293 by S.typhimurium protein Ssek3. Highly expressed in heart, lung and kidney.

The protein resides in the membrane. Its function is as follows. Receptor for the cytotoxic ligand TNFSF10/TRAIL. The adapter molecule FADD recruits caspase-8 to the activated receptor. The resulting death-inducing signaling complex (DISC) performs caspase-8 proteolytic activation which initiates the subsequent cascade of caspases (aspartate-specific cysteine proteases) mediating apoptosis. Promotes the activation of NF-kappa-B. Essential for ER stress-induced apoptosis. The polypeptide is Tumor necrosis factor receptor superfamily member 10B (Tnfrsf10b) (Mus musculus (Mouse)).